The primary structure comprises 362 residues: Cobalt-precorrin-5B C(1)-methyltransferase (362 aa).

This sequence belongs to the CbiD family.

It catalyses the reaction Co-precorrin-5B + S-adenosyl-L-methionine = Co-precorrin-6A + S-adenosyl-L-homocysteine. The protein operates within cofactor biosynthesis; adenosylcobalamin biosynthesis; cob(II)yrinate a,c-diamide from sirohydrochlorin (anaerobic route): step 6/10. Functionally, catalyzes the methylation of C-1 in cobalt-precorrin-5B to form cobalt-precorrin-6A. This is Cobalt-precorrin-5B C(1)-methyltransferase from Desulfotalea psychrophila (strain LSv54 / DSM 12343).